The primary structure comprises 1333 residues: Vascular endothelial growth factor receptor 1 (1333 aa).

The N-terminal stretch at 1–22 (MVSCWDTAVLPYALLGCLLLTG) is a signal peptide. The Extracellular portion of the chain corresponds to 23–759 (YGSGSKLKVP…QGTSDKSNLE (737 aa)). Ig-like C2-type domains are found at residues 32-124 (PELS…AESS), 152-215 (GRQL…VNGH), 231-328 (LDVQ…TSVH), 334-429 (FISV…NVKP), 430-550 (QIYE…RNIK), 557-656 (PNGF…EVLV), and 662-748 (PHLL…AYLT). Disulfide bonds link Cys53–Cys108 and Cys159–Cys208. N-linked (GlcNAc...) asparagine glycosylation is found at Asn101, Asn165, Asn197, and Asn252. The cysteines at positions 253 and 312 are disulfide-linked. N-linked (GlcNAc...) asparagine glycans are attached at residues Asn324, Asn418, Asn475, Asn517, Asn598, Asn626, Asn667, and Asn714. 2 disulfide bridges follow: Cys455–Cys536 and Cys578–Cys637. Cys683 and Cys732 are oxidised to a cystine. The helical transmembrane segment at 760 to 781 (LITLTCTCVAATLFWLLLTLFI) threads the bilayer. Residues 782 to 1333 (RKLKRSSSEV…SVVLYSSPPA (552 aa)) are Cytoplasmic-facing. One can recognise a Protein kinase domain in the interval 828-1158 (LKLGKSLGRG…ELVEKLGDLL (331 aa)). ATP contacts are provided by residues 834–842 (LGRGAFGKV) and Lys862. Residue Tyr915 is modified to Phosphotyrosine; by autocatalysis. Residues 947–983 (EPGLEQGQKPRLDSVSSSSVTSSSFPEDRSVSDVEGD) are disordered. A compositionally biased stretch (low complexity) spans 960-970 (SVSSSSVTSSS). The Proton acceptor role is filled by Asp1022. Phosphotyrosine; by autocatalysis is present on residues Tyr1053, Tyr1169, Tyr1213, Tyr1242, Tyr1322, and Tyr1328.

Belongs to the protein kinase superfamily. Tyr protein kinase family. CSF-1/PDGF receptor subfamily. Interacts with VEGFA, VEGFB and PGF. Monomer in the absence of bound VEGFA, VEGFB or PGF. Homodimer in the presence of bound VEGFA, VEGFB and PGF. Can also form a heterodimer with KDR. Interacts (tyrosine phosphorylated) with CBL, CRK, GRB2, NCK1, PIK3R1, PLCG, PSEN1 and PTPN11. Probably interacts with PTPRB. Interacts with RACK1. Identified in a complex with CBL and CD2AP. In terms of processing, N-glycosylated. Ubiquitinated after VEGFA-mediated autophosphorylation, leading to proteolytic degradation. Post-translationally, autophosphorylated on tyrosine residues upon ligand binding. Autophosphorylation occurs in trans, i.e. one subunit of the dimeric receptor phosphorylates tyrosine residues on the other subunit. Phosphorylation at Tyr-1169 is important for interaction with PLCG. Phosphorylation at Tyr-1213 is important for interaction with PIK3R1, PTPN11, GRB2, and PLCG. Phosphorylation at Tyr-1328 is important for endocytosis and for interaction with CBL, NCK1 and CRK. Is probably dephosphorylated by PTPRB.

It localises to the cell membrane. The protein resides in the endosome. It carries out the reaction L-tyrosyl-[protein] + ATP = O-phospho-L-tyrosyl-[protein] + ADP + H(+). Its activity is regulated as follows. Present in an inactive conformation in the absence of bound ligand. Binding of VEGFA, VEGFB or PGF leads to dimerization and activation by autophosphorylation on tyrosine residues. Its function is as follows. Tyrosine-protein kinase that acts as a cell-surface receptor for VEGFA, VEGFB and PGF, and plays an essential role in the development of embryonic vasculature, the regulation of angiogenesis, cell survival, cell migration, macrophage function, chemotaxis, and cancer cell invasion. Acts as a positive regulator of postnatal retinal hyaloid vessel regression. May play an essential role as a negative regulator of embryonic angiogenesis by inhibiting excessive proliferation of endothelial cells. Can promote endothelial cell proliferation, survival and angiogenesis in adulthood. Its function in promoting cell proliferation seems to be cell-type specific. Promotes PGF-mediated proliferation of endothelial cells, and proliferation of some types of cancer cells, but does not promote proliferation of normal fibroblasts. Has very high affinity for VEGFA and relatively low protein kinase activity; may function as a negative regulator of VEGFA signaling by limiting the amount of free VEGFA and preventing its binding to KDR. Modulates KDR signaling by forming heterodimers with KDR. Ligand binding leads to the activation of several signaling cascades. Activation of PLCG leads to the production of the cellular signaling molecules diacylglycerol and inositol 1,4,5-trisphosphate and the activation of protein kinase C. Mediates phosphorylation of PIK3R1, the regulatory subunit of phosphatidylinositol 3-kinase, leading to the activation of phosphatidylinositol kinase and the downstream signaling pathway. Mediates activation of MAPK1/ERK2, MAPK3/ERK1 and the MAP kinase signaling pathway, as well as of the AKT1 signaling pathway. Phosphorylates SRC, YES1 and PLCG, and may also phosphorylate CBL. Promotes phosphorylation of AKT1 and PTK2/FAK1. This chain is Vascular endothelial growth factor receptor 1 (Flt1), found in Mus musculus (Mouse).